The following is a 104-amino-acid chain: Large ribosomal subunit protein bL21 (104 aa).

This sequence belongs to the bacterial ribosomal protein bL21 family. In terms of assembly, part of the 50S ribosomal subunit. Contacts protein L20.

Its function is as follows. This protein binds to 23S rRNA in the presence of protein L20. This Helicobacter pylori (strain P12) protein is Large ribosomal subunit protein bL21.